We begin with the raw amino-acid sequence, 288 residues long: ATP phosphoribosyltransferase (288 aa).

Belongs to the ATP phosphoribosyltransferase family. Long subfamily. The cofactor is Mg(2+).

The protein localises to the cytoplasm. The enzyme catalyses 1-(5-phospho-beta-D-ribosyl)-ATP + diphosphate = 5-phospho-alpha-D-ribose 1-diphosphate + ATP. The protein operates within amino-acid biosynthesis; L-histidine biosynthesis; L-histidine from 5-phospho-alpha-D-ribose 1-diphosphate: step 1/9. Feedback inhibited by histidine. Its function is as follows. Catalyzes the condensation of ATP and 5-phosphoribose 1-diphosphate to form N'-(5'-phosphoribosyl)-ATP (PR-ATP). Has a crucial role in the pathway because the rate of histidine biosynthesis seems to be controlled primarily by regulation of HisG enzymatic activity. The chain is ATP phosphoribosyltransferase from Methanococcus maripaludis (strain C6 / ATCC BAA-1332).